The following is a 104-amino-acid chain: Seminal ribonuclease (104 aa).

Disulfide bonds link Cys12/Cys70, Cys26/Cys81, Cys44/Cys96, and Cys51/Cys58. Substrate-binding positions include 27-31, Lys52, and Arg71; that span reads KPVNT.

It belongs to the pancreatic ribonuclease family. As to quaternary structure, homodimer; disulfide-linked.

It is found in the secreted. The catalysed reaction is an [RNA] containing cytidine + H2O = an [RNA]-3'-cytidine-3'-phosphate + a 5'-hydroxy-ribonucleotide-3'-[RNA].. It carries out the reaction an [RNA] containing uridine + H2O = an [RNA]-3'-uridine-3'-phosphate + a 5'-hydroxy-ribonucleotide-3'-[RNA].. This is Seminal ribonuclease (SRN) from Saiga tatarica (Saiga antelope).